We begin with the raw amino-acid sequence, 176 residues long: Protein KleF (176 aa).

The polypeptide is Protein KleF (kleF) (Escherichia coli).